The chain runs to 124 residues: Ragulator complex protein LAMTOR3 (124 aa).

Positions T57–S70 are required for interaction with LAMTOR2.

The protein belongs to the LAMTOR3 family. Part of the Ragulator complex composed of LAMTOR1, LAMTOR2, LAMTOR3, LAMTOR4 and LAMTOR5. LAMTOR4 and LAMTOR5 form a heterodimer that interacts, through LAMTOR1, with a LAMTOR2, LAMTOR3 heterodimer. Interacts with LAMTOR1 and LAMTOR2; the interaction is direct. The Ragulator complex interacts with both the mTORC1 complex and heterodimers constituted of the Rag GTPases RagA/RRAGA, RagB/RRAGB, RagC/RRAGC and RagD/RRAGD; regulated by amino acid availability. The Ragulator complex interacts with SLC38A9; the probable amino acid sensor. Component of the lysosomal folliculin complex (LFC), composed of FLCN, FNIP1 (or FNIP2), RagA/RRAGA or RagB/RRAGB GDP-bound, RagC/RRAGC or RagD/RRAGD GTP-bound, and Ragulator. Interacts with MAP2K1/MEK1 and MAPK2. Interacts with MORG1.

The protein resides in the late endosome membrane. As part of the Ragulator complex it is involved in amino acid sensing and activation of mTORC1, a signaling complex promoting cell growth in response to growth factors, energy levels, and amino acids. Activated by amino acids through a mechanism involving the lysosomal V-ATPase, the Ragulator plays a dual role for the small GTPases Rag (RagA/RRAGA, RagB/RRAGB, RagC/RRAGC and/or RagD/RRAGD): it (1) acts as a guanine nucleotide exchange factor (GEF), activating the small GTPases Rag and (2) mediates recruitment of Rag GTPases to the lysosome membrane. Activated Ragulator and Rag GTPases function as a scaffold recruiting mTORC1 to lysosomes where it is in turn activated. Adapter protein that enhances the efficiency of the MAP kinase cascade facilitating the activation of MAPK2. This chain is Ragulator complex protein LAMTOR3, found in Homo sapiens (Human).